The following is a 427-amino-acid chain: Probable anaerobic glycerol-3-phosphate dehydrogenase subunit B (427 aa).

The protein belongs to the anaerobic G-3-P dehydrogenase subunit B family. Requires FMN as cofactor.

The catalysed reaction is a quinone + sn-glycerol 3-phosphate = dihydroxyacetone phosphate + a quinol. Its pathway is polyol metabolism; glycerol degradation via glycerol kinase pathway; glycerone phosphate from sn-glycerol 3-phosphate (anaerobic route): step 1/1. In Halobacterium salinarum (strain ATCC 29341 / DSM 671 / R1), this protein is Probable anaerobic glycerol-3-phosphate dehydrogenase subunit B.